A 110-amino-acid polypeptide reads, in one-letter code: UPF0367 protein sync_2587 (110 aa).

This sequence belongs to the UPF0367 family.

In Synechococcus sp. (strain CC9311), this protein is UPF0367 protein sync_2587.